The chain runs to 1759 residues: Zinc finger protein castor homolog 1 (1759 aa).

Disordered stretches follow at residues 1–26 (MDLGTAEGTRCTDPPAGKPAMAPKRK) and 46–175 (KRAD…SSLR). Basic and acidic residues-rich tracts occupy residues 77–88 (PRSEEDKRRAVI) and 137–160 (EEPSKDGGALEEKDSDGAASKEDS). The span at 161-171 (GPSTRQASGEA) shows a compositional bias: polar residues. A Glycyl lysine isopeptide (Lys-Gly) (interchain with G-Cter in SUMO2) cross-link involves residue Lys288. Positions 374–420 (SKYDVRGIQKPGPAKVPPTPSLAPAPLASVPSAPSAPGPGPEPPASL) are disordered. The span at 387-396 (AKVPPTPSLA) shows a compositional bias: pro residues. The segment covering 397–406 (PAPLASVPSA) has biased composition (low complexity). A compositionally biased stretch (pro residues) spans 407–417 (PSAPGPGPEPP). 3 C2H2-type zinc fingers span residues 551–575 (YHCMQVGCNKVYTSTSDVMTHENFH), 610–634 (FHCRRPGCTFTFKNKCDIEKHKSYH), and 668–692 (FHCIRAGCGFTFTSTSQMTSHKRKH). Disordered regions lie at residues 686-723 (TSHKRKHERRHIRSSGALGLPPSLLGAKDTEHEESSND), 736-776 (SSLS…SGLL), 824-843 (VSSGSAASATPDTPTLVASG), and 889-949 (ATFD…AVPA). The span at 687–698 (SHKRKHERRHIR) shows a compositional bias: basic residues. Positions 699-712 (SSGALGLPPSLLGA) are enriched in low complexity. Residues Ser720 and Ser721 each carry the phosphoserine modification. Residues 736–764 (SSLSASPTSQQSSASLAAATAATEAGPSA) are compositionally biased toward low complexity. Positions 925–939 (ASQDRSLDLTVKEPS) are enriched in basic and acidic residues. Lys975 is covalently cross-linked (Glycyl lysine isopeptide (Lys-Gly) (interchain with G-Cter in SUMO2)). Ser981 carries the phosphoserine modification. A C2H2-type 4 zinc finger spans residues 1031–1055 (FHCVVEECGALFSTLDGAIKHANFH). The interval 1067–1111 (TEAAFPASAAETKPPMAPSSPPVPPVTTATVSSLEGPAPSPASVP) is disordered. Residues 1081 to 1091 (PMAPSSPPVPP) are compositionally biased toward pro residues. The C2H2-type 5 zinc-finger motif lies at 1300-1324 (FHCIREGCQFSFLLKHQMTSHARKH). Residues 1367-1392 (ESSTMDRSCSSTPVGNESTAAGNTIS) form a disordered region. 3 C2H2-type zinc fingers span residues 1457-1481 (YHCTRENCGYKFCGRTHMYKHAQHH), 1515-1537 (FHCLRCRFRCTDSTKVTAHRKHH), and 1571-1595 (FHCTFPGCRHTVVGMSQMDSHKRKH). Disordered regions lie at residues 1589-1620 (DSHKRKHEKQERGEPAAEGPAPGPPISLDGSL) and 1643-1736 (LGDA…AGAR). Residues 1655–1673 (AAPGPREGAAAAAAAAGES) show a composition bias toward low complexity. Residues 1674–1723 (SQEDEEEELELPEEEAEDDEDEDDDEDDDDEDDDEDDDDEDLRTDSEESL) show a composition bias toward acidic residues. The segment covering 1724–1736 (PEAAAEAAGAGAR) has biased composition (low complexity).

In terms of tissue distribution, expressed in heart, lung, skeletal muscle, pancreas, testis, small intestine, and stomach, but it is not detectable in the adult brain.

Its subcellular location is the nucleus. Functionally, transcriptional activator. Involved in vascular assembly and morphogenesis through direct transcriptional regulation of EGFL7. This chain is Zinc finger protein castor homolog 1 (CASZ1), found in Homo sapiens (Human).